The primary structure comprises 171 residues: Viral CASP8 and FADD-like apoptosis regulator (171 aa).

2 DED domains span residues 1–74 and 92–171; these read MSHY…RIFG and PFRC…NLQV.

In terms of assembly, associates with the death-inducing signaling complex (DISC) formed by TNFRSF6, FADD and caspase-8. Interacts with FADD.

Functionally, inhibits TNFRSF1A, TNFRSF6, TNFRSF10 and TNFRSF12 induced apoptosis. May interfere with caspase-8 recruitment and activation at the death-inducing signaling complex (DISC). May lead to higher virus production and contribute to virus persistence and oncogenicity. The chain is Viral CASP8 and FADD-like apoptosis regulator from Equus caballus (Horse).